The sequence spans 210 residues: ATP-dependent Clp protease proteolytic subunit (210 aa).

The Nucleophile role is filled by S107. Residue H132 is part of the active site.

Belongs to the peptidase S14 family. As to quaternary structure, fourteen ClpP subunits assemble into 2 heptameric rings which stack back to back to give a disk-like structure with a central cavity, resembling the structure of eukaryotic proteasomes.

The protein localises to the cytoplasm. It carries out the reaction Hydrolysis of proteins to small peptides in the presence of ATP and magnesium. alpha-casein is the usual test substrate. In the absence of ATP, only oligopeptides shorter than five residues are hydrolyzed (such as succinyl-Leu-Tyr-|-NHMec, and Leu-Tyr-Leu-|-Tyr-Trp, in which cleavage of the -Tyr-|-Leu- and -Tyr-|-Trp bonds also occurs).. Its function is as follows. Cleaves peptides in various proteins in a process that requires ATP hydrolysis. Has a chymotrypsin-like activity. Plays a major role in the degradation of misfolded proteins. In Ruegeria sp. (strain TM1040) (Silicibacter sp.), this protein is ATP-dependent Clp protease proteolytic subunit.